The following is a 395-amino-acid chain: Acid ceramidase (395 aa).

Positions 1–21 (MPGRSRVALVLLAAAVSCAVA) are cleaved as a signal peptide. A disulfide bridge connects residues Cys31 and Cys340. Cys143 serves as the catalytic Nucleophile. 4 N-linked (GlcNAc...) asparagine glycosylation sites follow: Asn195, Asn259, Asn286, and Asn342. A disulfide bridge links Cys388 with Cys392.

It belongs to the acid ceramidase family. As to quaternary structure, heterodimer; disulfide-linked. The heterodimer is composed of the disulfide-linked alpha and beta chains produced by autocatalytic cleavage of the precursor. N-glycosylated. Post-translationally, proteolytically cleaved into two chains alpha and beta that remain associated via a disulfide bond. Cleavage gives rise to a conformation change that activates the enzyme. The same catalytic Cys residue mediates the autoproteolytic cleavage and subsequent hydrolysis of lipid substrates. The beta chain may undergo an additional C-terminal processing.

The protein localises to the lysosome. It localises to the secreted. It carries out the reaction an N-acylsphing-4-enine + H2O = sphing-4-enine + a fatty acid. The enzyme catalyses N-dodecanoylsphing-4-enine + H2O = dodecanoate + sphing-4-enine. It catalyses the reaction N-tetradecanoylsphing-4-enine + H2O = tetradecanoate + sphing-4-enine. The catalysed reaction is N-hexadecanoylsphing-4-enine + H2O = sphing-4-enine + hexadecanoate. It carries out the reaction N-octadecanoylsphing-4-enine + H2O = sphing-4-enine + octadecanoate. The enzyme catalyses N-dodecanoyl-(4R)-hydroxysphinganine + H2O = (4R)-hydroxysphinganine + dodecanoate. It catalyses the reaction N-(dodecanoyl)-sphinganine + H2O = dodecanoate + sphinganine. The catalysed reaction is N-(acetyl)-sphing-4-enine + H2O = sphing-4-enine + acetate. It carries out the reaction N-(hexanoyl)sphing-4-enine + H2O = hexanoate + sphing-4-enine. The enzyme catalyses N-octanoylsphing-4-enine + H2O = octanoate + sphing-4-enine. It catalyses the reaction N-(9Z-octadecenoyl)-sphing-4-enine + H2O = sphing-4-enine + (9Z)-octadecenoate. The catalysed reaction is N-dodecanoylethanolamine + H2O = dodecanoate + ethanolamine. The protein operates within lipid metabolism; sphingolipid metabolism. Lysosomal ceramidase that hydrolyzes sphingolipid ceramides into sphingosine and free fatty acids at acidic pH. Ceramides, sphingosine, and its phosphorylated form sphingosine-1-phosphate are bioactive lipids that mediate cellular signaling pathways regulating several biological processes including cell proliferation, apoptosis and differentiation. Has a higher catalytic efficiency towards C12-ceramides versus other ceramides. Also catalyzes the reverse reaction allowing the synthesis of ceramides from fatty acids and sphingosine. For the reverse synthetic reaction, the natural sphingosine D-erythro isomer is more efficiently utilized as a substrate compared to D-erythro-dihydrosphingosine and D-erythro-phytosphingosine, while the fatty acids with chain lengths of 12 or 14 carbons are the most efficiently used. Also has an N-acylethanolamine hydrolase activity. By regulating the levels of ceramides, sphingosine and sphingosine-1-phosphate in the epidermis, mediates the calcium-induced differentiation of epidermal keratinocytes. Also indirectly regulates tumor necrosis factor/TNF-induced apoptosis. By regulating the intracellular balance between ceramides and sphingosine, in adrenocortical cells, probably also acts as a regulator of steroidogenesis. This is Acid ceramidase from Pan troglodytes (Chimpanzee).